A 321-amino-acid chain; its full sequence is Ribose-phosphate pyrophosphokinase C (321 aa).

Mg(2+) contacts are provided by D132 and D147. The interval 214–229 (SGKVAIIIGSIADTCE) is binding of phosphoribosylpyrophosphate.

The protein belongs to the ribose-phosphate pyrophosphokinase family. Requires Mg(2+) as cofactor.

The protein resides in the cytoplasm. It catalyses the reaction D-ribose 5-phosphate + ATP = 5-phospho-alpha-D-ribose 1-diphosphate + AMP + H(+). It participates in metabolic intermediate biosynthesis; 5-phospho-alpha-D-ribose 1-diphosphate biosynthesis; 5-phospho-alpha-D-ribose 1-diphosphate from D-ribose 5-phosphate (route I): step 1/1. The polypeptide is Ribose-phosphate pyrophosphokinase C (prsC) (Dictyostelium discoideum (Social amoeba)).